The primary structure comprises 267 residues: Undecaprenyl-diphosphatase (267 aa).

The next 8 helical transmembrane spans lie at 1 to 21, 39 to 59, 83 to 103, 111 to 131, 144 to 164, 189 to 209, 218 to 238, and 246 to 266; these read MSYFEAFMLALVQGFTEFLPI, QGLAFDVAVHVGTLAAVVIYF, AKLAWMIILATIPACIFGLLM, LRSAWVIATTTIIFGLLLWWV, AGWKKALFIGLAQAMAIIPGT, FLMSIPIITLAGGYLGLKLVT, TLLTGIVVSFISAYICIHFFL, and MTPFVIYRLILGFGLFAFLMM.

This sequence belongs to the UppP family.

It is found in the cell inner membrane. It catalyses the reaction di-trans,octa-cis-undecaprenyl diphosphate + H2O = di-trans,octa-cis-undecaprenyl phosphate + phosphate + H(+). Its function is as follows. Catalyzes the dephosphorylation of undecaprenyl diphosphate (UPP). Confers resistance to bacitracin. The chain is Undecaprenyl-diphosphatase from Vibrio atlanticus (strain LGP32) (Vibrio splendidus (strain Mel32)).